Consider the following 140-residue polypeptide: Nucleoside diphosphate kinase (140 aa).

Residues K11, F59, R87, T93, R104, and N114 each contribute to the ATP site. H117 serves as the catalytic Pros-phosphohistidine intermediate.

It belongs to the NDK family. As to quaternary structure, homotetramer. It depends on Mg(2+) as a cofactor.

Its subcellular location is the cytoplasm. It carries out the reaction a 2'-deoxyribonucleoside 5'-diphosphate + ATP = a 2'-deoxyribonucleoside 5'-triphosphate + ADP. It catalyses the reaction a ribonucleoside 5'-diphosphate + ATP = a ribonucleoside 5'-triphosphate + ADP. Its function is as follows. Major role in the synthesis of nucleoside triphosphates other than ATP. The ATP gamma phosphate is transferred to the NDP beta phosphate via a ping-pong mechanism, using a phosphorylated active-site intermediate. This chain is Nucleoside diphosphate kinase, found in Granulibacter bethesdensis (strain ATCC BAA-1260 / CGDNIH1).